Reading from the N-terminus, the 95-residue chain is Large ribosomal subunit protein uL23c (95 aa).

This sequence belongs to the universal ribosomal protein uL23 family. As to quaternary structure, part of the 50S ribosomal subunit.

The protein localises to the plastid. Its subcellular location is the chloroplast. Its function is as follows. Binds to 23S rRNA. In Guillardia theta (Cryptophyte), this protein is Large ribosomal subunit protein uL23c (rpl23).